Consider the following 160-residue polypeptide: Globin CTT-II beta (160 aa).

An N-terminal signal peptide occupies residues 1–15; sequence MKFLVLALCIAAAVA. The Globin domain maps to 17-160; it reads PLSADEASLV…NVFNMMFSYL (144 aa). 2 residues coordinate heme b: histidine 75 and histidine 110.

This sequence belongs to the globin family. As to quaternary structure, homodimer.

The chain is Globin CTT-II beta from Chironomus thummi thummi (Midge).